A 175-amino-acid chain; its full sequence is Ribulose bisphosphate carboxylase small subunit, chloroplastic (175 aa).

A chloroplast-targeting transit peptide spans 1-34; it reads MSFATTNKTIVPCATTKQIVRPRFLSNGTISKSR.

The protein belongs to the RuBisCO small chain family. Heterohexadecamer of 8 large and 8 small subunits.

The protein resides in the plastid. The protein localises to the chloroplast. In terms of biological role, ruBisCO catalyzes two reactions: the carboxylation of D-ribulose 1,5-bisphosphate, the primary event in carbon dioxide fixation, as well as the oxidative fragmentation of the pentose substrate. Both reactions occur simultaneously and in competition at the same active site. Although the small subunit is not catalytic it is essential for maximal activity. This Batophora oerstedii (Green alga) protein is Ribulose bisphosphate carboxylase small subunit, chloroplastic.